The following is a 486-amino-acid chain: Transcription factor VOZ1 (486 aa).

The tract at residues 208–405 (PPSAFLGPKC…VDGKKTSKGK (198 aa)) is VOZ. Zn(2+)-binding residues include C217, C222, C236, and H240. The C3H1-type; atypical zinc-finger motif lies at 217-240 (CALWDCPRPAQGFDWFQDYCSSFH). Residues 424 to 445 (EFPPENNTTNTTNNNKRCIKGR) form a disordered region. Low complexity predominate over residues 429-438 (NNTTNTTNNN).

As to quaternary structure, homodimer. Interacts with phytochrome B (phyB). As to expression, ubiquitous. Expressed in the vascular bundles of various tissues, specifically in the phloem.

The protein localises to the cytoplasm. It is found in the nucleus. In terms of biological role, transcriptional activator acting positively in the phytochrome B signaling pathway. Functions redundantly with VOZ2 to promote flowering downstream of phytochrome B (phyB). Down-regulates 'FLOWERING LOCUS C' (FLC) and up-regulates 'FLOWERING LOCUS T' (FT). Binds to the 38-bp cis-acting region of the AVP1 gene. Interacts with phyB in the cytoplasm and is translocated to the nucleus at signal transmission, where it is subjected to degradation in a phytochrome-dependent manner. The protein is Transcription factor VOZ1 (VOZ1) of Arabidopsis thaliana (Mouse-ear cress).